A 455-amino-acid chain; its full sequence is F-box/LRR-repeat protein At5g35995 (455 aa).

One can recognise an F-box domain in the interval 4–51 (RDFISSLPDEVLGKKILSLLPTKLVVSTSVLSKRWRNLFHFVDSFDLE). LRR repeat units follow at residues 114–138 (DHYLDIGIFFRNNTLVKLTLSSYRT), 152–176 (FPALKTLSLGAVVAKPALYNWLISG), 282–305 (IRNVKTLHLSSSSLEAFYYRCYTM), 308–324 (FDKLIHLSIESDKENGW), and 325–348 (QALPRLLLKSPNLQTLAIKGLLHK).

The chain is F-box/LRR-repeat protein At5g35995 from Arabidopsis thaliana (Mouse-ear cress).